The sequence spans 517 residues: L-amino-acid oxidase (517 aa).

A signal peptide spans 1–19 (MNVFSIFSLVFLAAFGSCA). Residues C29 and C192 are joined by a disulfide bond. Residues 62-63 (MA), 82-83 (EA), R90, and 106-109 (GPMR) each bind FAD. Position 109 (R109) interacts with substrate. N191 is a glycosylation site (N-linked (GlcNAc...) asparagine). V280 lines the FAD pocket. A disulfide bridge links C350 with C431. N380 carries an N-linked (GlcNAc...) asparagine glycan. Position 391 (Y391) interacts with substrate. Residues E476 and 483-488 (GWLDST) each bind FAD. Residue 483 to 484 (GW) participates in substrate binding.

Belongs to the flavin monoamine oxidase family. FIG1 subfamily. In terms of assembly, monomer. This is in contrast with most of its orthologs, that are non-covalently linked homodimers. FAD is required as a cofactor. Post-translationally, N-glycosylated. Expressed by the venom gland.

It is found in the secreted. The catalysed reaction is an L-alpha-amino acid + O2 + H2O = a 2-oxocarboxylate + H2O2 + NH4(+). It catalyses the reaction L-leucine + O2 + H2O = 4-methyl-2-oxopentanoate + H2O2 + NH4(+). The enzyme catalyses L-phenylalanine + O2 + H2O = 3-phenylpyruvate + H2O2 + NH4(+). It carries out the reaction L-tryptophan + O2 + H2O = indole-3-pyruvate + H2O2 + NH4(+). The catalysed reaction is L-methionine + O2 + H2O = 4-methylsulfanyl-2-oxobutanoate + H2O2 + NH4(+). It catalyses the reaction L-isoleucine + O2 + H2O = (S)-3-methyl-2-oxopentanoate + H2O2 + NH4(+). The enzyme catalyses L-arginine + O2 + H2O = 5-guanidino-2-oxopentanoate + H2O2 + NH4(+). It carries out the reaction L-aspartate + O2 + H2O = oxaloacetate + H2O2 + NH4(+). The catalysed reaction is L-histidine + O2 + H2O = 3-(imidazol-5-yl)pyruvate + H2O2 + NH4(+). It catalyses the reaction L-asparagine + O2 + H2O = 2-oxosuccinamate + H2O2 + NH4(+). The enzyme catalyses L-tyrosine + O2 + H2O = 3-(4-hydroxyphenyl)pyruvate + H2O2 + NH4(+). It carries out the reaction L-glutamine + O2 + H2O = 2-oxoglutaramate + H2O2 + NH4(+). The catalysed reaction is L-alanine + O2 + H2O = pyruvate + H2O2 + NH4(+). It catalyses the reaction L-lysine + O2 + H2O = 6-amino-2-oxohexanoate + H2O2 + NH4(+). The enzyme catalyses L-glutamate + O2 + H2O = H2O2 + 2-oxoglutarate + NH4(+). Its function is as follows. Catalyzes an oxidative deamination of predominantly hydrophobic and aromatic L-amino acids, thus producing hydrogen peroxide that may contribute to the diverse toxic effects of this enzyme. Is highly active against L-Tyr, L-Asp, L-Phe, L-Glu, L-Trp, L-His, L-Gln, L-Ile, L-Met, L-Leu and moderately active against L-Lys, L-Arg, L-Ala and L-Asn. Exhibits diverse biological activities, such as edema, inflammatory cell infiltration, cytotoxicity and apoptosis, as well as induction of platelet aggregation. Effects of snake L-amino oxidases on platelets are controversial, since they either induce aggregation or inhibit agonist-induced aggregation. These different effects are probably due to different experimental conditions. This protein may also induce hemorrhage, hemolysis, and have antibacterial and antiparasitic activities. This is L-amino-acid oxidase from Bungarus fasciatus (Banded krait).